The primary structure comprises 600 residues: Zinc metalloproteinase-disintegrin-like stejnihagin-A (600 aa).

An N-terminal signal peptide occupies residues 1–20; sequence MIEVLLVTICLAVFPYQGSS. The propeptide occupies 21 to 191; the sequence is IILESGNVND…KASQLVVTAE (171 aa). Pyrrolidone carboxylic acid is present on glutamine 192. Residues 198-389 form the Peptidase M12B domain; the sequence is RYVKLAIVAD…YNPQCILNAP (192 aa). Cystine bridges form between cysteine 306-cysteine 384, cysteine 346-cysteine 368, and cysteine 348-cysteine 351. Residue asparagine 317 is glycosylated (N-linked (GlcNAc...) asparagine). Histidine 331 is a Zn(2+) binding site. Glutamate 332 is a catalytic residue. The Zn(2+) site is built by histidine 335 and histidine 341. Residue asparagine 367 is glycosylated (N-linked (GlcNAc...) asparagine). One can recognise a Disintegrin domain in the interval 397-483; sequence PPVCGNELLE…DCPTDDFHRN (87 aa). Residues valine 399, asparagine 402, leucine 404, glutamate 406, glutamate 409, and aspartate 412 each coordinate Ca(2+). 14 cysteine pairs are disulfide-bonded: cysteine 400–cysteine 429, cysteine 411–cysteine 424, cysteine 413–cysteine 419, cysteine 423–cysteine 446, cysteine 437–cysteine 443, cysteine 442–cysteine 468, cysteine 455–cysteine 475, cysteine 462–cysteine 494, cysteine 487–cysteine 499, cysteine 506–cysteine 556, cysteine 521–cysteine 565, cysteine 534–cysteine 544, cysteine 551–cysteine 587, and cysteine 581–cysteine 593. The D/ECD-tripeptide motif lies at 461 to 463; that stretch reads ECD. Asparagine 568 carries an N-linked (GlcNAc...) asparagine glycan.

It belongs to the venom metalloproteinase (M12B) family. P-III subfamily. P-IIIa sub-subfamily. As to quaternary structure, monomer. Zn(2+) is required as a cofactor. In terms of tissue distribution, expressed by the venom gland.

Its subcellular location is the secreted. Its function is as follows. This metalloproteinase-disintegrin-like impairs hemostasis in the envenomed animal. This chain is Zinc metalloproteinase-disintegrin-like stejnihagin-A, found in Trimeresurus stejnegeri (Chinese green tree viper).